We begin with the raw amino-acid sequence, 296 residues long: MAAGGPAAGSAAPISSTSSLPLAALNMRVRRRLSLFLNVRTQVAADWTALAEEMDFEYLEIRQLETHADPTGRLLDAWQGRPGASVGRLLELLTKLGRDDVLLELGPSIEEDCQKYILKQQQEEAEKPLQVAAVDSSVPRTAELAGITTLDDPLGHMPERFDAFICYCPSDIQFVQEMIRQLEQTNYRLKLCVSDRDVLPGTCVWSIASELIEKRCRRMVVVVSDDYLQSKECDFQTKFALSLSPGAHQKRLIPIKYKAMKKEFPSILRFITVCDYTNPCTKSWFWTRLAKALSLP.

The 78-residue stretch at 32-109 folds into the Death domain; the sequence is RLSLFLNVRT…DVLLELGPSI (78 aa). Residues 110 to 155 are intermediate domain; it reads EEDCQKYILKQQQEEAEKPLQVAAVDSSVPRTAELAGITTLDDPLG. The TIR domain occupies 159 to 293; sequence ERFDAFICYC…WFWTRLAKAL (135 aa). Ser-244 is subject to Phosphoserine.

As to quaternary structure, homodimer. Also forms heterodimers with TIRAP. Binds to TLR2, TLR4, IRAK1, IRAK2 and IRAK4 via their respective TIR domains. Interacts with IL18R1. Interacts with BMX, IL1RL1, IKBKE and IRF7. Interacts with LRRFIP1 and LRRFIP2; this interaction positively regulates Toll-like receptor (TLR) signaling in response to agonist. Interacts with FLII. LRRFIP1 and LRRFIP2 compete with FLII for MYD88-binding. Interacts with IRF1. Upon IL1B treatment, forms a complex with PELI1, IRAK1, IRAK4 and TRAF6; this complex recruits MAP3K7/TAK1, TAB1 and TAB2 to mediate NF-kappa-B activation. Direct binding of SMAD6 to PELI1 prevents the complex formation and hence negatively regulates IL1R-TLR signaling and eventually NF-kappa-B-mediated gene expression. May interact with PIK3AP1. Interacts (via TIR domain) with DHX9 (via H2A and OB-fold regions); this interaction is direct. Interacts with OTUD4 deubiquitinase; the interaction is direct. In terms of processing, ubiquitinated; undergoes 'Lys-63'-linked polyubiquitination. OTUD4 specifically hydrolyzes 'Lys-63'-linked polyubiquitinated MYD88. Deubiquitinated by USP3 that cleaves 'Lys-63'-linked ubiquitin chains leading to inhibition of MYD88-induced NF-kappa-B signaling.

It localises to the cytoplasm. The protein resides in the nucleus. Adapter protein involved in the Toll-like receptor and IL-1 receptor signaling pathway in the innate immune response. Acts via IRAK1, IRAK2, IRF7 and TRAF6, leading to NF-kappa-B activation, cytokine secretion and the inflammatory response. Increases IL-8 transcription. Involved in IL-18-mediated signaling pathway. Activates IRF1 resulting in its rapid migration into the nucleus to mediate an efficient induction of IFN-beta, NOS2/INOS, and IL12A genes. Upon TLR8 activation by GU-rich single-stranded RNA (GU-rich RNA) derived from viruses, induces IL1B release through NLRP3 inflammasome activation. MyD88-mediated signaling in intestinal epithelial cells is crucial for maintenance of gut homeostasis and controls the expression of the antimicrobial lectin REG3G in the small intestine. This chain is Myeloid differentiation primary response protein MyD88 (MYD88), found in Pan troglodytes (Chimpanzee).